The following is a 276-amino-acid chain: Undecaprenyl-diphosphatase 1 (276 aa).

7 consecutive transmembrane segments (helical) span residues I4–V24, K45–E62, F83–K103, V108–W128, V187–E207, V217–C237, and V252–W272.

Belongs to the UppP family.

It localises to the cell inner membrane. It carries out the reaction di-trans,octa-cis-undecaprenyl diphosphate + H2O = di-trans,octa-cis-undecaprenyl phosphate + phosphate + H(+). Functionally, catalyzes the dephosphorylation of undecaprenyl diphosphate (UPP). Confers resistance to bacitracin. This Burkholderia ambifaria (strain ATCC BAA-244 / DSM 16087 / CCUG 44356 / LMG 19182 / AMMD) (Burkholderia cepacia (strain AMMD)) protein is Undecaprenyl-diphosphatase 1.